The primary structure comprises 478 residues: SPbeta prophage-derived uncharacterized protein YonD (478 aa).

Positions 326-419 form a coiled coil; sequence IQSQLNQKDE…KFSTEEVQNL (94 aa).

This chain is SPbeta prophage-derived uncharacterized protein YonD (yonD), found in Bacillus subtilis (strain 168).